The following is a 361-amino-acid chain: MSLIETVPVNTEHKSVPVHLHSNLSGLSEEIAKLPGVTSVFLITEKSIHSIYSKYLERELSSLPIKTIYIKGGEKSKHINRTGEVYNQLIEYGADRKSLILAFGGGVVGDFAGFIASTYLRGIRFVQIPTTLLACVDSSVGGKVAVNADFGKNMIGSFYQPEFVFAPLSVLSTLPDREWKCGQAEIIKHSLLSGGEYWEKVKTHSFKDLNVDSTILPYLIAESVRFKANVVSSDEKETGLRKILNLGHTTAHAIESVTKYKKYSHGEAVAIGLVTALLLSEQHSELDPVTTKETIESLKNYGLPFQTKLKSKQLAKHMLHDKKNVGGSIRFVLLKSPGSPIFDIPINSEDIILAIHKQKGI.

Residues 106 to 110 (GVVGD), 130 to 131 (TT), Lys143, and Lys152 contribute to the NAD(+) site. 3 residues coordinate Zn(2+): Glu185, His248, and His265.

This sequence belongs to the sugar phosphate cyclases superfamily. Dehydroquinate synthase family. It depends on NAD(+) as a cofactor. Co(2+) is required as a cofactor. The cofactor is Zn(2+).

The protein localises to the cytoplasm. It carries out the reaction 7-phospho-2-dehydro-3-deoxy-D-arabino-heptonate = 3-dehydroquinate + phosphate. It functions in the pathway metabolic intermediate biosynthesis; chorismate biosynthesis; chorismate from D-erythrose 4-phosphate and phosphoenolpyruvate: step 2/7. In terms of biological role, catalyzes the conversion of 3-deoxy-D-arabino-heptulosonate 7-phosphate (DAHP) to dehydroquinate (DHQ). This chain is 3-dehydroquinate synthase, found in Leptospira interrogans serogroup Icterohaemorrhagiae serovar copenhageni (strain Fiocruz L1-130).